We begin with the raw amino-acid sequence, 143 residues long: Sirohydrochlorin cobaltochelatase (143 aa).

Residue His9 is the Proton acceptor of the active site. His9 provides a ligand contact to Co(2+). Residue His9 coordinates Ni(2+). Substrate contacts are provided by residues Glu45 and 70-75 (LAHGIH). His75 is a binding site for Co(2+). His75 serves as a coordination point for Ni(2+).

The protein belongs to the CbiX family. CbiXS subfamily. As to quaternary structure, homotetramer; dimer of dimers.

The catalysed reaction is Co-sirohydrochlorin + 2 H(+) = sirohydrochlorin + Co(2+). It carries out the reaction Ni-sirohydrochlorin + 2 H(+) = sirohydrochlorin + Ni(2+). Its pathway is cofactor biosynthesis; adenosylcobalamin biosynthesis; cob(II)yrinate a,c-diamide from sirohydrochlorin (anaerobic route): step 1/10. In terms of biological role, catalyzes the insertion of Co(2+) into sirohydrochlorin as part of the anaerobic pathway to cobalamin biosynthesis. Involved in the biosynthesis of the unique nickel-containing tetrapyrrole coenzyme F430, the prosthetic group of methyl-coenzyme M reductase (MCR), which plays a key role in methanogenesis and anaerobic methane oxidation. Catalyzes the insertion of Ni(2+) into sirohydrochlorin to yield Ni-sirohydrochlorin. This is Sirohydrochlorin cobaltochelatase from Methanocaldococcus jannaschii (strain ATCC 43067 / DSM 2661 / JAL-1 / JCM 10045 / NBRC 100440) (Methanococcus jannaschii).